The sequence spans 194 residues: Leucyl/phenylalanyl-tRNA--protein transferase (194 aa).

This sequence belongs to the L/F-transferase family.

The protein resides in the cytoplasm. The catalysed reaction is N-terminal L-lysyl-[protein] + L-leucyl-tRNA(Leu) = N-terminal L-leucyl-L-lysyl-[protein] + tRNA(Leu) + H(+). The enzyme catalyses N-terminal L-arginyl-[protein] + L-leucyl-tRNA(Leu) = N-terminal L-leucyl-L-arginyl-[protein] + tRNA(Leu) + H(+). It catalyses the reaction L-phenylalanyl-tRNA(Phe) + an N-terminal L-alpha-aminoacyl-[protein] = an N-terminal L-phenylalanyl-L-alpha-aminoacyl-[protein] + tRNA(Phe). Functions in the N-end rule pathway of protein degradation where it conjugates Leu, Phe and, less efficiently, Met from aminoacyl-tRNAs to the N-termini of proteins containing an N-terminal arginine or lysine. The chain is Leucyl/phenylalanyl-tRNA--protein transferase from Chlorobium luteolum (strain DSM 273 / BCRC 81028 / 2530) (Pelodictyon luteolum).